Reading from the N-terminus, the 339-residue chain is Large ribosomal subunit protein uL10 (339 aa).

Residues 300 to 339 (AAAQATPSVEEREEEEKPEEEEEEEEKEEEAIEGLGALFG) are disordered. Residues 310–331 (EREEEEKPEEEEEEEEKEEEAI) show a composition bias toward acidic residues.

Belongs to the universal ribosomal protein uL10 family. Part of the 50S ribosomal subunit. Forms part of the ribosomal stalk which helps the ribosome interact with GTP-bound translation factors. Forms a heptameric L10(L12)2(L12)2(L12)2 complex, where L10 forms an elongated spine to which the L12 dimers bind in a sequential fashion.

Its function is as follows. Forms part of the ribosomal stalk, playing a central role in the interaction of the ribosome with GTP-bound translation factors. The sequence is that of Large ribosomal subunit protein uL10 from Archaeoglobus fulgidus (strain ATCC 49558 / DSM 4304 / JCM 9628 / NBRC 100126 / VC-16).